A 559-amino-acid chain; its full sequence is 2-isopropylmalate synthase (559 aa).

The 275-residue stretch at 33–307 (PIWCSSDLRD…NPELDFSDID (275 aa)) folds into the Pyruvate carboxyltransferase domain. Residues aspartate 42, histidine 246, histidine 248, and asparagine 282 each contribute to the Mg(2+) site. A regulatory domain region spans residues 439 to 559 (ANTPYALVSH…SLSEQQAKAA (121 aa)).

Belongs to the alpha-IPM synthase/homocitrate synthase family. LeuA type 2 subfamily. In terms of assembly, homodimer. It depends on Mg(2+) as a cofactor.

The protein resides in the cytoplasm. The catalysed reaction is 3-methyl-2-oxobutanoate + acetyl-CoA + H2O = (2S)-2-isopropylmalate + CoA + H(+). The protein operates within amino-acid biosynthesis; L-leucine biosynthesis; L-leucine from 3-methyl-2-oxobutanoate: step 1/4. In terms of biological role, catalyzes the condensation of the acetyl group of acetyl-CoA with 3-methyl-2-oxobutanoate (2-ketoisovalerate) to form 3-carboxy-3-hydroxy-4-methylpentanoate (2-isopropylmalate). In Pseudomonas fluorescens (strain ATCC BAA-477 / NRRL B-23932 / Pf-5), this protein is 2-isopropylmalate synthase.